Here is a 549-residue protein sequence, read N- to C-terminus: Cytoplasmic trehalase (549 aa).

Substrate is bound by residues R168, 175-176 (WD), N212, 221-223 (RSQ), 292-294 (RDE), and G324. Residues D326 and E509 each act as proton donor/acceptor in the active site. E525 contacts substrate.

It belongs to the glycosyl hydrolase 37 family. As to quaternary structure, monomer.

The protein localises to the cytoplasm. It catalyses the reaction alpha,alpha-trehalose + H2O = alpha-D-glucose + beta-D-glucose. It participates in glycan degradation; trehalose degradation; D-glucose from alpha,alpha-trehalose: step 1/1. Hydrolyzes trehalose to glucose. Could be involved, in cells returning to low osmolarity conditions, in the utilization of the accumulated cytoplasmic trehalose, which was synthesized in response to high osmolarity. In Salmonella schwarzengrund (strain CVM19633), this protein is Cytoplasmic trehalase.